Consider the following 395-residue polypeptide: Chorismate synthase (395 aa).

Belongs to the chorismate synthase family. In terms of assembly, homotetramer. Requires FMNH2 as cofactor.

The enzyme catalyses 5-O-(1-carboxyvinyl)-3-phosphoshikimate = chorismate + phosphate. The protein operates within metabolic intermediate biosynthesis; chorismate biosynthesis; chorismate from D-erythrose 4-phosphate and phosphoenolpyruvate: step 7/7. This is Chorismate synthase from Schizosaccharomyces pombe (strain 972 / ATCC 24843) (Fission yeast).